The sequence spans 381 residues: 1-deoxy-D-xylulose 5-phosphate reductoisomerase (381 aa).

Residues S10, G11, S12, I13, G36, K37, N38, and N121 each contribute to the NADPH site. K122 is a 1-deoxy-D-xylulose 5-phosphate binding site. E123 lines the NADPH pocket. Mn(2+) is bound at residue D147. Residues S148, E149, S173, and H196 each contribute to the 1-deoxy-D-xylulose 5-phosphate site. E149 is a binding site for Mn(2+). G202 serves as a coordination point for NADPH. Positions 209, 214, 215, and 218 each coordinate 1-deoxy-D-xylulose 5-phosphate. E218 contributes to the Mn(2+) binding site.

It belongs to the DXR family. It depends on Mg(2+) as a cofactor. The cofactor is Mn(2+).

The catalysed reaction is 2-C-methyl-D-erythritol 4-phosphate + NADP(+) = 1-deoxy-D-xylulose 5-phosphate + NADPH + H(+). It participates in isoprenoid biosynthesis; isopentenyl diphosphate biosynthesis via DXP pathway; isopentenyl diphosphate from 1-deoxy-D-xylulose 5-phosphate: step 1/6. Its function is as follows. Catalyzes the NADPH-dependent rearrangement and reduction of 1-deoxy-D-xylulose-5-phosphate (DXP) to 2-C-methyl-D-erythritol 4-phosphate (MEP). In Geobacillus sp. (strain WCH70), this protein is 1-deoxy-D-xylulose 5-phosphate reductoisomerase.